Consider the following 482-residue polypeptide: UDP-N-acetylmuramate--L-alanine ligase (482 aa).

123 to 129 (GTHGKTT) lines the ATP pocket.

It belongs to the MurCDEF family.

Its subcellular location is the cytoplasm. The enzyme catalyses UDP-N-acetyl-alpha-D-muramate + L-alanine + ATP = UDP-N-acetyl-alpha-D-muramoyl-L-alanine + ADP + phosphate + H(+). The protein operates within cell wall biogenesis; peptidoglycan biosynthesis. Cell wall formation. The sequence is that of UDP-N-acetylmuramate--L-alanine ligase from Pseudomonas putida (strain ATCC 700007 / DSM 6899 / JCM 31910 / BCRC 17059 / LMG 24140 / F1).